The chain runs to 207 residues: 8-oxoguanine DNA glycosylase/AP lyase (207 aa).

Active-site residues include K129 and D147.

The protein belongs to the type-2 OGG1 family.

The enzyme catalyses 2'-deoxyribonucleotide-(2'-deoxyribose 5'-phosphate)-2'-deoxyribonucleotide-DNA = a 3'-end 2'-deoxyribonucleotide-(2,3-dehydro-2,3-deoxyribose 5'-phosphate)-DNA + a 5'-end 5'-phospho-2'-deoxyribonucleoside-DNA + H(+). In terms of biological role, catalyzes the excision of an oxidatively damaged form of guanine (7,8-dihydro-8-oxoguanine = 8-oxoG) from DNA. Also cleaves the DNA backbone at apurinic/apyrimidinic sites (AP sites). This is 8-oxoguanine DNA glycosylase/AP lyase from Thermotoga sp. (strain RQ2).